We begin with the raw amino-acid sequence, 212 residues long: ATP-dependent dethiobiotin synthetase BioD (212 aa).

13–18 provides a ligand contact to ATP; that stretch reads GIGKTV. Threonine 17 contacts Mg(2+). The active site involves lysine 33. Serine 37 contributes to the substrate binding site. Glutamate 100 contributes to the Mg(2+) binding site. ATP contacts are provided by residues 100 to 103 and 184 to 186; these read EGAG and PRL.

It belongs to the dethiobiotin synthetase family. As to quaternary structure, homodimer. Requires Mg(2+) as cofactor.

The protein localises to the cytoplasm. The catalysed reaction is (7R,8S)-7,8-diammoniononanoate + CO2 + ATP = (4R,5S)-dethiobiotin + ADP + phosphate + 3 H(+). It functions in the pathway cofactor biosynthesis; biotin biosynthesis; biotin from 7,8-diaminononanoate: step 1/2. Catalyzes a mechanistically unusual reaction, the ATP-dependent insertion of CO2 between the N7 and N8 nitrogen atoms of 7,8-diaminopelargonic acid (DAPA, also called 7,8-diammoniononanoate) to form a ureido ring. This Rhodopseudomonas palustris (strain TIE-1) protein is ATP-dependent dethiobiotin synthetase BioD.